Reading from the N-terminus, the 294-residue chain is Nucleotide-binding protein CLL_A3342 (294 aa).

Residue 8–15 (GLSGAGKT) participates in ATP binding. 59 to 62 (DIRG) provides a ligand contact to GTP.

The protein belongs to the RapZ-like family.

In terms of biological role, displays ATPase and GTPase activities. This chain is Nucleotide-binding protein CLL_A3342, found in Clostridium botulinum (strain Eklund 17B / Type B).